The following is a 303-amino-acid chain: Sulfate adenylyltransferase subunit 2 (303 aa).

This sequence belongs to the PAPS reductase family. CysD subfamily. In terms of assembly, heterodimer composed of CysD, the smaller subunit, and CysN.

It catalyses the reaction sulfate + ATP + H(+) = adenosine 5'-phosphosulfate + diphosphate. It functions in the pathway sulfur metabolism; hydrogen sulfide biosynthesis; sulfite from sulfate: step 1/3. In terms of biological role, with CysN forms the ATP sulfurylase (ATPS) that catalyzes the adenylation of sulfate producing adenosine 5'-phosphosulfate (APS) and diphosphate, the first enzymatic step in sulfur assimilation pathway. APS synthesis involves the formation of a high-energy phosphoric-sulfuric acid anhydride bond driven by GTP hydrolysis by CysN coupled to ATP hydrolysis by CysD. The chain is Sulfate adenylyltransferase subunit 2 from Akkermansia muciniphila (strain ATCC BAA-835 / DSM 22959 / JCM 33894 / BCRC 81048 / CCUG 64013 / CIP 107961 / Muc).